We begin with the raw amino-acid sequence, 140 residues long: Relaxin-3 (140 aa).

Positions 1–26 are cleaved as a signal peptide; sequence MAKRPLLLLLLAVWVLAGELWLRTEA. Disulfide bonds link C36-C127, C48-C140, and C126-C131. Residues 56-116 constitute a propeptide, connecting peptide; that stretch reads SDMLAHEALG…RTPGALRGSR (61 aa).

The protein belongs to the insulin family. Heterodimer of a B chain and an A chain linked by two disulfide bonds.

The protein localises to the secreted. May play a role in neuropeptide signaling processes. Ligand for LGR7, RXFP3 and RXFP4. In Sus scrofa (Pig), this protein is Relaxin-3 (RLN3).